Reading from the N-terminus, the 418-residue chain is Glutamyl-tRNA reductase (418 aa).

Residues 49–52 (TCNR), Ser-109, 114–116 (EPQ), and Gln-120 each bind substrate. Cys-50 serves as the catalytic Nucleophile. Position 189 to 194 (189 to 194 (GAGETI)) interacts with NADP(+).

It belongs to the glutamyl-tRNA reductase family. In terms of assembly, homodimer.

It carries out the reaction (S)-4-amino-5-oxopentanoate + tRNA(Glu) + NADP(+) = L-glutamyl-tRNA(Glu) + NADPH + H(+). The protein operates within porphyrin-containing compound metabolism; protoporphyrin-IX biosynthesis; 5-aminolevulinate from L-glutamyl-tRNA(Glu): step 1/2. In terms of biological role, catalyzes the NADPH-dependent reduction of glutamyl-tRNA(Glu) to glutamate 1-semialdehyde (GSA). This is Glutamyl-tRNA reductase from Klebsiella pneumoniae (strain 342).